A 359-amino-acid polypeptide reads, in one-letter code: Zinc finger CCCH domain-containing protein 20 (359 aa).

C3H1-type zinc fingers lie at residues 75–107 (TCDHFRMYEFKVRRCARGRSHDWTECPYAHPGE), 119–145 (YSGTACPEFRKGCCKRGDACEFSHGVF), and 153–177 (RYRTQPCKDGGNCRRRVCFFAHSPD). 2 disordered regions span residues 207–226 (SISPSSNSPPVSPRGDSDSS) and 334–359 (MGRIEPDPDQGAGDTPDVGWVSDLVM).

In Arabidopsis thaliana (Mouse-ear cress), this protein is Zinc finger CCCH domain-containing protein 20.